A 580-amino-acid chain; its full sequence is Type 3 secretion system translocon protein SctE (580 aa).

The next 2 helical transmembrane spans lie at 313-333 (ILGA…GGAS) and 399-419 (IGSI…VVLV).

It belongs to the SctE/SipB/YopB family. In terms of assembly, the core secretion machinery of the T3SS is composed of approximately 20 different proteins, including cytoplasmic components, a base, an export apparatus and a needle. This subunit is involved in the formation of a pore, called the translocon, in host membrane.

The protein localises to the secreted. Its subcellular location is the host membrane. Its function is as follows. Component of the type III secretion system (T3SS), also called injectisome, which is used to inject bacterial effector proteins into eukaryotic host cells. IpaB/SctE and IpaC/SctB are inserted into the host membrane where they form a pore and allow the translocation of effector proteins into the cytosol of target cells. This Shigella dysenteriae protein is Type 3 secretion system translocon protein SctE.